A 34-amino-acid chain; its full sequence is Conotoxin de13a (34 aa).

2 positions are modified to 4-hydroxyproline: Pro3 and Pro7. A 6'-bromotryptophan modification is found at Trp14. The residue at position 18 (Lys18) is a 5-hydroxylysine. At Pro21 the chain carries 4-hydroxyproline. Lys25 is subject to 5-hydroxylysine. At His32 the chain carries Histidine amide.

Post-translationally, contains 4 disulfide bonds. The diastereomeric form of 5-hydroxylysine found was not conclusively established, but it is probably 5R. Expressed by the venom duct.

It localises to the secreted. This is Conotoxin de13a from Conasprella delessertii (Sozon's cone).